Reading from the N-terminus, the 625-residue chain is Glutamine--fructose-6-phosphate aminotransferase [isomerizing] (625 aa).

Cys2 (nucleophile; for GATase activity) is an active-site residue. Residues 2-229 (CGIVGFVGRT…NDQIVTITAD (228 aa)) form the Glutamine amidotransferase type-2 domain. SIS domains follow at residues 296–436 (IDES…LRGN) and 470–615 (LAQD…VDQP). Lys620 (for Fru-6P isomerization activity) is an active-site residue.

Homodimer.

It is found in the cytoplasm. The enzyme catalyses D-fructose 6-phosphate + L-glutamine = D-glucosamine 6-phosphate + L-glutamate. In terms of biological role, catalyzes the first step in hexosamine metabolism, converting fructose-6P into glucosamine-6P using glutamine as a nitrogen source. The protein is Glutamine--fructose-6-phosphate aminotransferase [isomerizing] of Corynebacterium diphtheriae (strain ATCC 700971 / NCTC 13129 / Biotype gravis).